The following is a 145-amino-acid chain: MLSSSPASCTSPSPDGENPCKKVHWASGRRRTSSTDSESKSHPDSSKIPRSRRPSRLTVKYDRGQLQRWLEMEQWVDAQVQELFQDQATPSEPEIDLEALMDLSTEEQKTQLEAILGNCPRPTEAFISELLSQLKKLRRLSRPQK.

Positions 1–14 (MLSSSPASCTSPSP) are enriched in low complexity. The tract at residues 1–59 (MLSSSPASCTSPSPDGENPCKKVHWASGRRRTSSTDSESKSHPDSSKIPRSRRPSRLTV) is disordered. An interaction with protein phosphatase 1 region spans residues 21-25 (KKVHW). Positions 21-32 (KKVHWASGRRRT) are enriched in basic residues. Residues 37–47 (SESKSHPDSSK) are compositionally biased toward basic and acidic residues. Thr58 bears the Phosphothreonine mark.

Belongs to the PP1 inhibitor family. Phosphorylated on several residues. As to expression, detected in colon, intestine, kidney and brain cortex.

It is found in the cytoplasm. Inhibitor of PPP1CA. Has inhibitory activity only when phosphorylated, creating a molecular switch for regulating the phosphorylation status of PPP1CA substrates and smooth muscle contraction. The polypeptide is Protein phosphatase 1 regulatory subunit 14D (PPP1R14D) (Homo sapiens (Human)).